The sequence spans 95 residues: Large ribosomal subunit protein bL25 (95 aa).

It belongs to the bacterial ribosomal protein bL25 family. In terms of assembly, part of the 50S ribosomal subunit; part of the 5S rRNA/L5/L18/L25 subcomplex. Contacts the 5S rRNA. Binds to the 5S rRNA independently of L5 and L18.

Functionally, this is one of the proteins that binds to the 5S RNA in the ribosome where it forms part of the central protuberance. The polypeptide is Large ribosomal subunit protein bL25 (Haemophilus influenzae (strain ATCC 51907 / DSM 11121 / KW20 / Rd)).